A 293-amino-acid polypeptide reads, in one-letter code: Ribosomal RNA small subunit methyltransferase A (293 aa).

Positions 29, 31, 56, 77, 102, and 127 each coordinate S-adenosyl-L-methionine.

It belongs to the class I-like SAM-binding methyltransferase superfamily. rRNA adenine N(6)-methyltransferase family. RsmA subfamily.

It localises to the cytoplasm. It carries out the reaction adenosine(1518)/adenosine(1519) in 16S rRNA + 4 S-adenosyl-L-methionine = N(6)-dimethyladenosine(1518)/N(6)-dimethyladenosine(1519) in 16S rRNA + 4 S-adenosyl-L-homocysteine + 4 H(+). Functionally, specifically dimethylates two adjacent adenosines (A1518 and A1519) in the loop of a conserved hairpin near the 3'-end of 16S rRNA in the 30S particle. May play a critical role in biogenesis of 30S subunits. This chain is Ribosomal RNA small subunit methyltransferase A, found in Geobacillus kaustophilus (strain HTA426).